We begin with the raw amino-acid sequence, 557 residues long: Formate--tetrahydrofolate ligase (557 aa).

Position 65–72 (65–72) interacts with ATP; sequence TPAGEGKT.

The protein belongs to the formate--tetrahydrofolate ligase family.

It carries out the reaction (6S)-5,6,7,8-tetrahydrofolate + formate + ATP = (6R)-10-formyltetrahydrofolate + ADP + phosphate. It participates in one-carbon metabolism; tetrahydrofolate interconversion. This Methylorubrum extorquens (strain PA1) (Methylobacterium extorquens) protein is Formate--tetrahydrofolate ligase.